Consider the following 525-residue polypeptide: MALERLCSVLKVLLITVLVVEGIAVAQKTQDGQNIGIKHIPATQCGIWVRTSNGGHFASPNYPDSYPPNKECIYILEAAPRQRIELTFDEHYYIEPSFECRFDHLEVRDGPFGFSPLIDRYCGVKSPPLIRSTGRFMWIKFSSDEELEGLGFRAKYSFIPDPDFTYLGGILNPIPDCQFELSGADGIVRSSQVEQEEKTKPGQAVDCIWTIKATPKAKIYLRFLDYQMEHSNECKRNFVAVYDGSSSIENLKAKFCSTVANDVMLKTGIGVIRMWADEGSRLSRFRMLFTSFVEPPCTSSTFFCHSNMCINNSLVCNGVQNCAYPWDENHCKEKKKAGVFEQITKTHGTIIGITSGIVLVLLIISILVQVKQPRKKVMACKTAFNKTGFQEVFDPPHYELFSLRDKEISADLADLSEELDNYQKMRRSSTASRCIHDHHCGSQASSVKQSRTNLSSMELPFRNDFAQPQPMKTFNSTFKKSSYTFKQGHECPEQALEDRVMEEIPCEIYVRGREDSAQASISIDF.

Residues 1 to 22 form the signal peptide; sequence MALERLCSVLKVLLITVLVVEG. The Extracellular segment spans residues 23–347; sequence IAVAQKTQDG…GVFEQITKTH (325 aa). 7 disulfide bridges follow: cysteine 45–cysteine 72, cysteine 100–cysteine 122, cysteine 177–cysteine 207, cysteine 234–cysteine 256, cysteine 297–cysteine 309, cysteine 304–cysteine 322, and cysteine 316–cysteine 331. CUB domains lie at 45–159 and 177–292; these read CGIW…YSFI and CQFE…FTSF. In terms of domain architecture, LDL-receptor class A spans 296–332; it reads PCTSSTFFCHSNMCINNSLVCNGVQNCAYPWDENHCK. A glycan (N-linked (GlcNAc...) asparagine) is linked at asparagine 311. The chain crosses the membrane as a helical span at residues 348 to 368; that stretch reads GTIIGITSGIVLVLLIISILV. Topologically, residues 369–525 are cytoplasmic; that stretch reads QVKQPRKKVM…SAQASISIDF (157 aa). Serine 409 carries the post-translational modification Phosphoserine.

Interacts with GRIK2 and GRIK3, but neither with AMPA-nor with NMDA-sensitive glutamate receptors. N-glycosylated.

The protein resides in the membrane. Accessory subunit of neuronal kainate-sensitive glutamate receptors, GRIK2 and GRIK3. Increases kainate-receptor channel activity, slowing the decay kinetics of the receptors, without affecting their expression at the cell surface, and increasing the open probability of the receptor channels. Modulates the agonist sensitivity of kainate receptors. Slows the decay of kainate receptor-mediated excitatory postsynaptic currents (EPSCs), thus directly influencing synaptic transmission. The protein is Neuropilin and tolloid-like protein 2 (NETO2) of Homo sapiens (Human).